The following is a 374-amino-acid chain: UPF0754 membrane protein SAS1767 (374 aa).

2 helical membrane passes run 4-24 (LFII…TNVI) and 354-374 (SLGF…AIFV).

It belongs to the UPF0754 family.

The protein resides in the cell membrane. In Staphylococcus aureus (strain MSSA476), this protein is UPF0754 membrane protein SAS1767.